A 242-amino-acid polypeptide reads, in one-letter code: Trypsin-1 (242 aa).

The signal sequence occupies residues 1-15 (MISLVFVLLIGAAFA). Residues 16–20 (TEDDK) constitute a propeptide, activation peptide. Residues 21–240 (IVGGYECKAY…FNDWLTSTMA (220 aa)) form the Peptidase S1 domain. Intrachain disulfides connect Cys-27-Cys-156, Cys-45-Cys-61, Cys-129-Cys-229, Cys-136-Cys-202, Cys-167-Cys-181, and Cys-192-Cys-216. Catalysis depends on His-60, which acts as the Charge relay system. Positions 72, 74, 77, and 82 each coordinate Ca(2+). Asp-104 (charge relay system) is an active-site residue. The Charge relay system role is filled by Ser-196.

The protein belongs to the peptidase S1 family. The cofactor is Ca(2+).

The protein resides in the secreted. It localises to the extracellular space. The catalysed reaction is Preferential cleavage: Arg-|-Xaa, Lys-|-Xaa.. This chain is Trypsin-1, found in Salmo salar (Atlantic salmon).